Consider the following 109-residue polypeptide: Acylphosphatase (109 aa).

The 88-residue stretch at 22 to 109 (RLRARVEGVV…GEFSSFDVVY (88 aa)) folds into the Acylphosphatase-like domain. Catalysis depends on residues R37 and N55.

The protein belongs to the acylphosphatase family.

The catalysed reaction is an acyl phosphate + H2O = a carboxylate + phosphate + H(+). The sequence is that of Acylphosphatase (acyP) from Arthrobacter sp. (strain FB24).